The chain runs to 189 residues: UPF0149 protein VF_2102 (189 aa).

Belongs to the UPF0149 family.

The polypeptide is UPF0149 protein VF_2102 (Aliivibrio fischeri (strain ATCC 700601 / ES114) (Vibrio fischeri)).